Reading from the N-terminus, the 607-residue chain is Phosphoenolpyruvate carboxykinase [GTP] (607 aa).

Residues Arg81 and Tyr221–Gly223 each bind substrate. 2 residues coordinate Mn(2+): Lys230 and His250. Ser272 is a binding site for substrate. Position 273–278 (Ala273–Asn278) interacts with GTP. Residue Cys274 is part of the active site. Asp297 contacts Mn(2+). Asn388–Arg390 is a binding site for substrate. GTP is bound by residues Arg390, Arg421, and Phe516–Asn519.

Belongs to the phosphoenolpyruvate carboxykinase [GTP] family. As to quaternary structure, monomer. Requires Mn(2+) as cofactor.

The protein localises to the cytoplasm. The enzyme catalyses oxaloacetate + GTP = phosphoenolpyruvate + GDP + CO2. Its pathway is carbohydrate biosynthesis; gluconeogenesis. In terms of biological role, catalyzes the conversion of oxaloacetate (OAA) to phosphoenolpyruvate (PEP), the rate-limiting step in the metabolic pathway that produces glucose from lactate and other precursors derived from the citric acid cycle. The chain is Phosphoenolpyruvate carboxykinase [GTP] from Renibacterium salmoninarum (strain ATCC 33209 / DSM 20767 / JCM 11484 / NBRC 15589 / NCIMB 2235).